The sequence spans 669 residues: DNA mismatch repair protein MutL (669 aa).

The span at 356–371 shows a compositional bias: basic and acidic residues; that stretch reads FEQRQNTENKQEKTFS. Residues 356–379 are disordered; sequence FEQRQNTENKQEKTFSSEESNSKP.

The protein belongs to the DNA mismatch repair MutL/HexB family.

In terms of biological role, this protein is involved in the repair of mismatches in DNA. It is required for dam-dependent methyl-directed DNA mismatch repair. May act as a 'molecular matchmaker', a protein that promotes the formation of a stable complex between two or more DNA-binding proteins in an ATP-dependent manner without itself being part of a final effector complex. This Staphylococcus aureus (strain MRSA252) protein is DNA mismatch repair protein MutL.